A 285-amino-acid polypeptide reads, in one-letter code: Phospholipid phosphatase 1 (285 aa).

The Cytoplasmic portion of the chain corresponds to 1-6; sequence MFDKAR. The short motif at 5–7 is the PDZ-binding; involved in localization to the apical cell membrane element; that stretch reads ARL. Residues 7–27 form a helical membrane-spanning segment; sequence LPYVALDVLCVVLAGLPFAIL. The Extracellular segment spans residues 28–53; the sequence is TSRHTPFQRGIFCNDESIKYPYKEDT. Residues 54–74 form a helical membrane-spanning segment; the sequence is IPYALLGGIMIPFSIVVMIIG. The Cytoplasmic segment spans residues 75 to 94; sequence ETLSVYCNLLHSNSFIRNNY. A helical membrane pass occupies residues 95–115; it reads IATIYKSIGTFLFGAAASQSL. The Extracellular segment spans residues 116–165; it reads TDIAKYSIGRLRPHFLSVCDPDWSKVNCSDGYIEYYVCRGNAEKVKEGRL. Positions 120–128 are phosphatase sequence motif I; the sequence is KYSIGRLRP. An N-linked (GlcNAc...) asparagine glycan is attached at Asn-142. A helical membrane pass occupies residues 166–186; that stretch reads SFYSGHSSFSMYCMVFVALYL. The tract at residues 168-171 is phosphatase sequence motif II; sequence YSGH. His-171 (proton donors) is an active-site residue. Residues 187-199 lie on the Cytoplasmic side of the membrane; it reads QARMKGDWARLLR. A helical transmembrane segment spans residues 200 to 220; that stretch reads PTLQFGLVAASIYVGLSRISD. The segment at 216–227 is phosphatase sequence motif III; sequence SRISDYKHHWSD. Over 221–229 the chain is Extracellular; that stretch reads YKHHWSDVL. The active-site Nucleophile is the His-223. Residues 230–250 traverse the membrane as a helical segment; it reads TGLIQGAIVAILVAVYVSDFF. At 251 to 285 the chain is on the cytoplasmic side; that stretch reads KARNSPFQERKEEDSHTTLHETPTAGNHYRSNHQP. Residues 260–269 are compositionally biased toward basic and acidic residues; it reads RKEEDSHTTL. The interval 260–285 is disordered; it reads RKEEDSHTTLHETPTAGNHYRSNHQP.

The protein belongs to the PA-phosphatase related phosphoesterase family. Forms functional homodimers and homooligomers that are not required for substrate recognition and catalytic activity. Can also form heterooligomers with PLPP2 and PLPP3. Post-translationally, N-glycosylated. N-linked sugars are of the complex type. N-glycosylation is not required for the phosphatase activity.

The protein localises to the cell membrane. It is found in the apical cell membrane. It localises to the membrane raft. Its subcellular location is the membrane. The protein resides in the caveola. It catalyses the reaction a 1,2-diacyl-sn-glycero-3-phosphate + H2O = a 1,2-diacyl-sn-glycerol + phosphate. The enzyme catalyses 1,2-dihexadecanoyl-sn-glycero-3-phosphate + H2O = 1,2-dihexadecanoyl-sn-glycerol + phosphate. The catalysed reaction is 1,2-di-(9Z-octadecenoyl)-sn-glycero-3-phosphate + H2O = 1,2-di-(9Z-octadecenoyl)-sn-glycerol + phosphate. It carries out the reaction a monoacyl-sn-glycero-3-phosphate + H2O = a monoacylglycerol + phosphate. It catalyses the reaction (9Z)-octadecenoyl-sn-glycero-3-phosphate + H2O = (9Z-octadecenoyl)-glycerol + phosphate. The enzyme catalyses a 1-acyl-sn-glycero-3-phosphate + H2O = a 1-acyl-sn-glycerol + phosphate. The catalysed reaction is 1-(9Z-octadecenoyl)-sn-glycero-3-phosphate + H2O = 1-(9Z-octadecenoyl)-sn-glycerol + phosphate. It carries out the reaction a 1,2-diacyl-sn-glycerol 3-diphosphate + H2O = a 1,2-diacyl-sn-glycero-3-phosphate + phosphate + H(+). It catalyses the reaction sphing-4-enine 1-phosphate + H2O = sphing-4-enine + phosphate. The enzyme catalyses an N-acylsphing-4-enine 1-phosphate + H2O = an N-acylsphing-4-enine + phosphate. The catalysed reaction is N-(octanoyl)-sphing-4-enine-1-phosphate + H2O = N-octanoylsphing-4-enine + phosphate. It carries out the reaction N-(9Z-octadecenoyl)-ethanolamine phosphate + H2O = N-(9Z-octadecenoyl) ethanolamine + phosphate. It catalyses the reaction 1-hexadecanoyl-2-(9Z-octadecenoyl)-sn-glycero-3-phosphate + H2O = 1-hexadecanoyl-2-(9Z-octadecenoyl)-sn-glycerol + phosphate. It participates in lipid metabolism; phospholipid metabolism. Magnesium-independent phospholipid phosphatase. Insensitive to N-ethylmaleimide. Its function is as follows. Magnesium-independent phospholipid phosphatase of the plasma membrane that catalyzes the dephosphorylation of a variety of glycerolipid and sphingolipid phosphate esters including phosphatidate/PA, lysophosphatidate/LPA, diacylglycerol pyrophosphate/DGPP, sphingosine 1-phosphate/S1P and ceramide 1-phosphate/C1P. Also acts on N-oleoyl ethanolamine phosphate/N-(9Z-octadecenoyl)-ethanolamine phosphate, a potential physiological compound. Through its extracellular phosphatase activity allows both the hydrolysis and the cellular uptake of these bioactive lipid mediators from the milieu, regulating signal transduction in different cellular processes. It is for instance essential for the extracellular hydrolysis of S1P and subsequent conversion into intracellular S1P. Involved in the regulation of inflammation, platelets activation, cell proliferation and migration among other processes. May also have an intracellular activity to regulate phospholipid-mediated signaling pathways. In Cavia porcellus (Guinea pig), this protein is Phospholipid phosphatase 1.